Reading from the N-terminus, the 156-residue chain is ATP synthase subunit b (156 aa).

Residues 11–31 (AIAFVLFVMFCMKFVWPPIMA) form a helical membrane-spanning segment.

This sequence belongs to the ATPase B chain family. In terms of assembly, F-type ATPases have 2 components, F(1) - the catalytic core - and F(0) - the membrane proton channel. F(1) has five subunits: alpha(3), beta(3), gamma(1), delta(1), epsilon(1). F(0) has three main subunits: a(1), b(2) and c(10-14). The alpha and beta chains form an alternating ring which encloses part of the gamma chain. F(1) is attached to F(0) by a central stalk formed by the gamma and epsilon chains, while a peripheral stalk is formed by the delta and b chains.

It is found in the cell inner membrane. Functionally, f(1)F(0) ATP synthase produces ATP from ADP in the presence of a proton or sodium gradient. F-type ATPases consist of two structural domains, F(1) containing the extramembraneous catalytic core and F(0) containing the membrane proton channel, linked together by a central stalk and a peripheral stalk. During catalysis, ATP synthesis in the catalytic domain of F(1) is coupled via a rotary mechanism of the central stalk subunits to proton translocation. Component of the F(0) channel, it forms part of the peripheral stalk, linking F(1) to F(0). This chain is ATP synthase subunit b, found in Photorhabdus laumondii subsp. laumondii (strain DSM 15139 / CIP 105565 / TT01) (Photorhabdus luminescens subsp. laumondii).